Here is a 29-residue protein sequence, read N- to C-terminus: Cyclotide vibi-D (29 aa).

The segment at residues 1–29 (GLPVCGETCFGGRCNTPGCTCSYPICTRN) is a cross-link (cyclopeptide (Gly-Asn)). 3 disulfides stabilise this stretch: Cys-5/Cys-19, Cys-9/Cys-21, and Cys-14/Cys-26.

In terms of processing, this is a cyclic peptide.

In terms of biological role, probably participates in a plant defense mechanism. Has moderate levels of cytotoxic activity, active against a human lymphoma cell line with an IC(50) of &gt;30 uM. This Viola biflora (Yellow wood violet) protein is Cyclotide vibi-D.